Reading from the N-terminus, the 386-residue chain is Putative F-box/kelch-repeat protein At4g11750 (386 aa).

The 47-residue stretch at 5 to 51 (PVDLPYIPDDLLLNCLARVSRLYYPILSLVSKRFRSLVASLELYEIR) folds into the F-box domain. Kelch repeat units lie at residues 187–236 (KIYV…VYDG), 238–285 (LYLF…YGRS), and 287–324 (VLMWYNTEERLWRYLKGLKKLPKLPKDCTCVRLLGYSG).

This Arabidopsis thaliana (Mouse-ear cress) protein is Putative F-box/kelch-repeat protein At4g11750.